The chain runs to 241 residues: ATP synthase subunit a (241 aa).

Transmembrane regions (helical) follow at residues 30–50, 91–111, 128–148, 193–213, and 214–234; these read GQVFMTSWIVIGAILALVVVG, FIGTLFLFIFVSNWGGSLVPW, INTTVALALLVSLSYFYAGLS, LVVAVLVFLVPLFLPVPVMFL, and GLFTSAIQALIFATLAAYYIG.

Belongs to the ATPase A chain family. In terms of assembly, F-type ATPases have 2 components, CF(1) - the catalytic core - and CF(0) - the membrane proton channel. CF(1) has five subunits: alpha(3), beta(3), gamma(1), delta(1), epsilon(1). CF(0) has four main subunits: a, b, b' and c.

The protein resides in the cellular thylakoid membrane. Its function is as follows. Key component of the proton channel; it plays a direct role in the translocation of protons across the membrane. The protein is ATP synthase subunit a of Prochlorococcus marinus (strain MIT 9313).